A 131-amino-acid chain; its full sequence is MIVCAEMDEHWGYVGAKSRQRWLFYAYDRIRRTVVAHVFGERTLATLERLLSLLSAFEVVVWMTDGWPLYESRLKGKLHVISKRYTQRIERHNLNLRQHLARLGRKSLSFSKSVELHDKVIGHYLNIKHYQ.

Belongs to the transposase 27 family.

In terms of biological role, absolutely required for transposition of IS1. The chain is Insertion element IS1 protein InsB (insB1) from Shigella flexneri.